A 716-amino-acid chain; its full sequence is Putative mannosyltransferase YkcB (716 aa).

The next 8 helical transmembrane spans lie at Leu8–Trp28, Met44–Val64, Ser87–Ile107, Ile118–Thr135, Asn137–Ile157, Lys159–Lys179, Met180–Ala200, and Ile206–Ile226. A disordered region spans residues Thr260 to Pro363. A compositionally biased stretch (polar residues) spans Glu278 to Pro289. Residues Asn290–Asn307 show a composition bias toward low complexity. Positions Pro318–Thr347 are enriched in gly residues. 6 helical membrane passes run Gln376–Ala396, Thr409–Phe429, Tyr433–Val453, Trp462–Leu482, Val491–Phe511, and Phe518–Ala538. The tract at residues Val664–Glu716 is disordered. Low complexity predominate over residues Thr680–Asn694.

It belongs to the glycosyltransferase 39 family.

Its subcellular location is the cell membrane. The sequence is that of Putative mannosyltransferase YkcB (ykcB) from Bacillus subtilis (strain 168).